The chain runs to 615 residues: uncharacterized protein (615 aa).

The protein belongs to the NodU/CmcH family.

This is an uncharacterized protein from Synechocystis sp. (strain ATCC 27184 / PCC 6803 / Kazusa).